The primary structure comprises 360 residues: Phospho-N-acetylmuramoyl-pentapeptide-transferase (360 aa).

The next 10 helical transmembrane spans lie at 2 to 22, 52 to 72, 80 to 100, 114 to 134, 156 to 176, 189 to 209, 235 to 255, 259 to 279, 284 to 304, and 338 to 358; these read IAIL…TPLF, MGGV…NISA, GLLL…DDFI, WKII…LQFP, LAFA…NFLI, LDGL…VVTM, LAIV…WNAS, IFMG…LSIL, FLAV…VIQI, and FWLI…AEWV.

The protein belongs to the glycosyltransferase 4 family. MraY subfamily. The cofactor is Mg(2+).

It is found in the cell membrane. It carries out the reaction UDP-N-acetyl-alpha-D-muramoyl-L-alanyl-gamma-D-glutamyl-meso-2,6-diaminopimeloyl-D-alanyl-D-alanine + di-trans,octa-cis-undecaprenyl phosphate = di-trans,octa-cis-undecaprenyl diphospho-N-acetyl-alpha-D-muramoyl-L-alanyl-D-glutamyl-meso-2,6-diaminopimeloyl-D-alanyl-D-alanine + UMP. It functions in the pathway cell wall biogenesis; peptidoglycan biosynthesis. In terms of biological role, catalyzes the initial step of the lipid cycle reactions in the biosynthesis of the cell wall peptidoglycan: transfers peptidoglycan precursor phospho-MurNAc-pentapeptide from UDP-MurNAc-pentapeptide onto the lipid carrier undecaprenyl phosphate, yielding undecaprenyl-pyrophosphoryl-MurNAc-pentapeptide, known as lipid I. This Beutenbergia cavernae (strain ATCC BAA-8 / DSM 12333 / CCUG 43141 / JCM 11478 / NBRC 16432 / NCIMB 13614 / HKI 0122) protein is Phospho-N-acetylmuramoyl-pentapeptide-transferase.